The sequence spans 224 residues: C-reactive protein (224 aa).

The signal sequence occupies residues 1–18; the sequence is MEKLLCFLVLTSLSHAFG. Q19 bears the Pyrrolidone carboxylic acid mark. The 202-residue stretch at 23-224 folds into the Pentraxin (PTX) domain; that stretch reads SRKAFVFPKE…EVFTKPQLWP (202 aa). Residues C54 and C115 are joined by a disulfide bond. Ca(2+)-binding residues include D78, N79, E156, Q157, D158, and Q168.

The protein belongs to the pentraxin family. Homopentamer. Pentraxin (or pentaxin) have a discoid arrangement of 5 non-covalently bound subunits. Interacts with FCN1; may regulate monocyte activation by FCN1. It depends on Ca(2+) as a cofactor. In terms of tissue distribution, found in plasma.

It is found in the secreted. In terms of biological role, displays several functions associated with host defense: it promotes agglutination, bacterial capsular swelling, phagocytosis and complement fixation through its calcium-dependent binding to phosphorylcholine. Can interact with DNA and histones and may scavenge nuclear material released from damaged circulating cells. In Homo sapiens (Human), this protein is C-reactive protein (CRP).